A 271-amino-acid chain; its full sequence is Formamidopyrimidine-DNA glycosylase (271 aa).

The Schiff-base intermediate with DNA role is filled by Pro-2. Catalysis depends on Glu-3, which acts as the Proton donor. Residue Lys-58 is the Proton donor; for beta-elimination activity of the active site. Residues His-92, Arg-111, and Lys-152 each contribute to the DNA site. An FPG-type zinc finger spans residues 237-271; it reads YVYGKVQKPCKICNNTITLIRQNGRSTYFCNACQN. Arg-261 acts as the Proton donor; for delta-elimination activity in catalysis.

The protein belongs to the FPG family. Monomer. Zn(2+) is required as a cofactor.

It catalyses the reaction Hydrolysis of DNA containing ring-opened 7-methylguanine residues, releasing 2,6-diamino-4-hydroxy-5-(N-methyl)formamidopyrimidine.. It carries out the reaction 2'-deoxyribonucleotide-(2'-deoxyribose 5'-phosphate)-2'-deoxyribonucleotide-DNA = a 3'-end 2'-deoxyribonucleotide-(2,3-dehydro-2,3-deoxyribose 5'-phosphate)-DNA + a 5'-end 5'-phospho-2'-deoxyribonucleoside-DNA + H(+). In terms of biological role, involved in base excision repair of DNA damaged by oxidation or by mutagenic agents. Acts as a DNA glycosylase that recognizes and removes damaged bases. Has a preference for oxidized purines, such as 7,8-dihydro-8-oxoguanine (8-oxoG). Has AP (apurinic/apyrimidinic) lyase activity and introduces nicks in the DNA strand. Cleaves the DNA backbone by beta-delta elimination to generate a single-strand break at the site of the removed base with both 3'- and 5'-phosphates. In Wolbachia sp. subsp. Brugia malayi (strain TRS), this protein is Formamidopyrimidine-DNA glycosylase.